The chain runs to 552 residues: Berberine bridge enzyme-like 6 (552 aa).

An N-terminal signal peptide occupies residues M1–P16. Cysteines 56 and 119 form a disulfide. 6 N-linked (GlcNAc...) asparagine glycosylation sites follow: N76, N161, N280, N364, N419, and N463. Residues F93–V270 enclose the FAD-binding PCMH-type domain. The 6-(S-cysteinyl)-8alpha-(pros-histidyl)-FAD (His-Cys) cross-link spans H134–C196.

It belongs to the oxygen-dependent FAD-linked oxidoreductase family. The cofactor is FAD. Post-translationally, the FAD cofactor is bound via a bicovalent 6-S-cysteinyl, 8alpha-N1-histidyl FAD linkage.

The protein resides in the secreted. Its subcellular location is the cell wall. Its function is as follows. Probable flavin-dependent oxidoreductase. This Arabidopsis thaliana (Mouse-ear cress) protein is Berberine bridge enzyme-like 6.